Consider the following 254-residue polypeptide: Ditrans,polycis-undecaprenyl-diphosphate synthase ((2E,6E)-farnesyl-diphosphate specific) (254 aa).

Residue Asp25 is part of the active site. Asp25 serves as a coordination point for Mg(2+). Substrate-binding positions include Gly26–Arg29, Trp30, Arg38, His42, and Ser70–Glu72. Asn73 serves as the catalytic Proton acceptor. Trp74, Arg76, and Arg193 together coordinate substrate. Position 198 (His198) interacts with Mg(2+). Substrate is bound at residue Arg199 to Ser201. Glu212 contributes to the Mg(2+) binding site.

Belongs to the UPP synthase family. Homodimer. Requires Mg(2+) as cofactor.

It catalyses the reaction 8 isopentenyl diphosphate + (2E,6E)-farnesyl diphosphate = di-trans,octa-cis-undecaprenyl diphosphate + 8 diphosphate. In terms of biological role, catalyzes the sequential condensation of isopentenyl diphosphate (IPP) with (2E,6E)-farnesyl diphosphate (E,E-FPP) to yield (2Z,6Z,10Z,14Z,18Z,22Z,26Z,30Z,34E,38E)-undecaprenyl diphosphate (di-trans,octa-cis-UPP). UPP is the precursor of glycosyl carrier lipid in the biosynthesis of bacterial cell wall polysaccharide components such as peptidoglycan and lipopolysaccharide. This chain is Ditrans,polycis-undecaprenyl-diphosphate synthase ((2E,6E)-farnesyl-diphosphate specific), found in Photorhabdus laumondii subsp. laumondii (strain DSM 15139 / CIP 105565 / TT01) (Photorhabdus luminescens subsp. laumondii).